An 85-amino-acid polypeptide reads, in one-letter code: Cytochrome c6 (85 aa).

Heme c-binding residues include C14, C17, H18, and M58.

It belongs to the cytochrome c family. PetJ subfamily. As to quaternary structure, monomer. Binds 1 heme c group covalently per subunit.

Its subcellular location is the plastid. The protein localises to the chloroplast thylakoid lumen. Functionally, functions as an electron carrier between membrane-bound cytochrome b6-f and photosystem I in oxygenic photosynthesis. This chain is Cytochrome c6 (petJ), found in Pyropia tenera (Nori).